The primary structure comprises 61 residues: Small ribosomal subunit protein uS14B (61 aa).

The Zn(2+) site is built by C24, C27, C40, and C43.

Belongs to the universal ribosomal protein uS14 family. Zinc-binding uS14 subfamily. In terms of assembly, part of the 30S ribosomal subunit. Contacts proteins S3 and S10. Zn(2+) serves as cofactor.

In terms of biological role, binds 16S rRNA, required for the assembly of 30S particles and may also be responsible for determining the conformation of the 16S rRNA at the A site. The chain is Small ribosomal subunit protein uS14B from Levilactobacillus brevis (strain ATCC 367 / BCRC 12310 / CIP 105137 / JCM 1170 / LMG 11437 / NCIMB 947 / NCTC 947) (Lactobacillus brevis).